We begin with the raw amino-acid sequence, 274 residues long: NH(3)-dependent NAD(+) synthetase (274 aa).

Residue 46–53 (GISGGQDS) participates in ATP binding. D52 lines the Mg(2+) pocket. R140 contacts deamido-NAD(+). T160 is an ATP binding site. E165 is a binding site for Mg(2+). The deamido-NAD(+) site is built by K173 and D180. 2 residues coordinate ATP: K189 and T211. A deamido-NAD(+)-binding site is contributed by 260-261 (HK).

This sequence belongs to the NAD synthetase family. In terms of assembly, homodimer.

It catalyses the reaction deamido-NAD(+) + NH4(+) + ATP = AMP + diphosphate + NAD(+) + H(+). It functions in the pathway cofactor biosynthesis; NAD(+) biosynthesis; NAD(+) from deamido-NAD(+) (ammonia route): step 1/1. Its function is as follows. Catalyzes the ATP-dependent amidation of deamido-NAD to form NAD. Uses ammonia as a nitrogen source. This Rhodococcus erythropolis (strain PR4 / NBRC 100887) protein is NH(3)-dependent NAD(+) synthetase.